Consider the following 198-residue polypeptide: Small ribosomal subunit protein uS4c (198 aa).

The disordered stretch occupies residues 17–40 (TLPGLTSKRPKNRKDSMNRSSSRK). Residues 88–154 (MRLDKSFSIG…IKKNIDLFQR (67 aa)) enclose the S4 RNA-binding domain.

Belongs to the universal ribosomal protein uS4 family. Part of the 30S ribosomal subunit. Contacts protein S5. The interaction surface between S4 and S5 is involved in control of translational fidelity.

The protein localises to the plastid. The protein resides in the chloroplast. In terms of biological role, one of the primary rRNA binding proteins, it binds directly to 16S rRNA where it nucleates assembly of the body of the 30S subunit. Functionally, with S5 and S12 plays an important role in translational accuracy. The chain is Small ribosomal subunit protein uS4c (rps4) from Pinus thunbergii (Japanese black pine).